The sequence spans 224 residues: MYAVKEVKGMDGVFIMNNSLLTINPNPGVKVYGERIIDWGGREYRVWDPRRSKLAAAILNGLRGFSLNSDSRVLYLGASAGTTASHISDIVTDGRVYCIEFSPRMMRELLGVCESRKNMAPLLEDASRPLSYLRMVEAADLVYCDVAQPDQTRLFIENMDCFLKRDGYGLIMIKARSIDVTRSPRKIFREEVGKLESSGFRIIDQVGLNPYEKDHMAVLVKRDV.

Residues 82-83 (TT), 100-101 (EF), 125-126 (DA), and 145-148 (DVAQ) contribute to the S-adenosyl-L-methionine site.

It belongs to the methyltransferase superfamily. Fibrillarin family. Interacts with nop5. Component of box C/D small ribonucleoprotein (sRNP) particles that contain rpl7ae, FlpA and nop5, plus a guide RNA.

Functionally, involved in pre-rRNA and tRNA processing. Utilizes the methyl donor S-adenosyl-L-methionine to catalyze the site-specific 2'-hydroxyl methylation of ribose moieties in rRNA and tRNA. Site specificity is provided by a guide RNA that base pairs with the substrate. Methylation occurs at a characteristic distance from the sequence involved in base pairing with the guide RNA. The sequence is that of Fibrillarin-like rRNA/tRNA 2'-O-methyltransferase from Methanothermobacter thermautotrophicus (strain ATCC 29096 / DSM 1053 / JCM 10044 / NBRC 100330 / Delta H) (Methanobacterium thermoautotrophicum).